Consider the following 213-residue polypeptide: Octanoyltransferase (213 aa).

In terms of domain architecture, BPL/LPL catalytic spans 36-211 (TNTPDEIWLV…KFCQQLGFKL (176 aa)). Residues 75–82 (RGGQVTYH), 142–144 (SLG), and 155–157 (GLA) contribute to the substrate site. Catalysis depends on Cys-173, which acts as the Acyl-thioester intermediate.

It belongs to the LipB family.

It localises to the cytoplasm. The enzyme catalyses octanoyl-[ACP] + L-lysyl-[protein] = N(6)-octanoyl-L-lysyl-[protein] + holo-[ACP] + H(+). It participates in protein modification; protein lipoylation via endogenous pathway; protein N(6)-(lipoyl)lysine from octanoyl-[acyl-carrier-protein]: step 1/2. Functionally, catalyzes the transfer of endogenously produced octanoic acid from octanoyl-acyl-carrier-protein onto the lipoyl domains of lipoate-dependent enzymes. Lipoyl-ACP can also act as a substrate although octanoyl-ACP is likely to be the physiological substrate. This chain is Octanoyltransferase, found in Photorhabdus laumondii subsp. laumondii (strain DSM 15139 / CIP 105565 / TT01) (Photorhabdus luminescens subsp. laumondii).